Reading from the N-terminus, the 309-residue chain is Probable manganese-dependent inorganic pyrophosphatase (309 aa).

Mn(2+)-binding residues include H9, D13, D15, D75, H97, and D149.

It belongs to the PPase class C family. Requires Mn(2+) as cofactor.

It localises to the cytoplasm. The enzyme catalyses diphosphate + H2O = 2 phosphate + H(+). This chain is Probable manganese-dependent inorganic pyrophosphatase, found in Bacillus licheniformis (strain ATCC 14580 / DSM 13 / JCM 2505 / CCUG 7422 / NBRC 12200 / NCIMB 9375 / NCTC 10341 / NRRL NRS-1264 / Gibson 46).